A 170-amino-acid chain; its full sequence is ATP synthase subunit b (170 aa).

The chain crosses the membrane as a helical span at residues 15 to 37 (FNLFETNILNWAVVIFGLYKFLP). The disordered stretch occupies residues 72–98 (AKKDLSSAEEKASQIKADSLKRSESIR).

It belongs to the ATPase B chain family. F-type ATPases have 2 components, F(1) - the catalytic core - and F(0) - the membrane proton channel. F(1) has five subunits: alpha(3), beta(3), gamma(1), delta(1), epsilon(1). F(0) has four main subunits: a(1), b(1), b'(1) and c(10-14). The alpha and beta chains form an alternating ring which encloses part of the gamma chain. F(1) is attached to F(0) by a central stalk formed by the gamma and epsilon chains, while a peripheral stalk is formed by the delta, b and b' chains.

It is found in the cellular thylakoid membrane. Its function is as follows. F(1)F(0) ATP synthase produces ATP from ADP in the presence of a proton or sodium gradient. F-type ATPases consist of two structural domains, F(1) containing the extramembraneous catalytic core and F(0) containing the membrane proton channel, linked together by a central stalk and a peripheral stalk. During catalysis, ATP synthesis in the catalytic domain of F(1) is coupled via a rotary mechanism of the central stalk subunits to proton translocation. Component of the F(0) channel, it forms part of the peripheral stalk, linking F(1) to F(0). The polypeptide is ATP synthase subunit b (Prochlorococcus marinus (strain MIT 9215)).